Here is a 514-residue protein sequence, read N- to C-terminus: Major facilitator superfamily domain-containing protein 4A (514 aa).

Helical transmembrane passes span 19–39 (LTYW…GPTL), 53–73 (ISWV…LGGV), 82–102 (LWAL…IPFC), 107–127 (VLAS…TVAN), and 139–159 (AVFL…SPLI). Asn177 carries an N-linked (GlcNAc...) asparagine glycan. A run of 7 helical transmembrane segments spans residues 221–241 (YAFW…LMLL), 307–327 (FFAI…LTGA), 347–367 (VAGY…LLSI), 376–396 (ATMV…LLIF), 400–420 (VVFL…TFPS), 438–458 (VLVT…GSIF), and 466–486 (FLVC…LLLF).

This sequence belongs to the major facilitator superfamily.

It localises to the membrane. The protein is Major facilitator superfamily domain-containing protein 4A of Homo sapiens (Human).